A 516-amino-acid chain; its full sequence is Effector protein hopAB1 (516 aa).

Disordered regions lie at residues 1 to 93 and 175 to 259; these read MSGI…AQPA and RALA…DEAL. The segment covering 16-30 has biased composition (basic and acidic residues); that stretch reads WRADDEPVTERERDS. The segment covering 31–41 has biased composition (polar residues); it reads SSGANLTNSPQ. The segment covering 81–90 has biased composition (pro residues); that stretch reads PVEPRQPPEA. 2 stretches are compositionally biased toward low complexity: residues 183-196 and 212-224; these read PAPS…SRSS and QTSS…SSTS.

Belongs to the HopAB family.

It localises to the secreted. In terms of biological role, effector protein that plays different roles depending on the species and plant cultivars that interact with the pathogen. Acts as a virulence determinant by enhancing the development of disease symptoms and bacterial growth. Acts as an avirulence factor by eliciting hypersensitive response (HR) and plant resistance. The polypeptide is Effector protein hopAB1 (hopAB1) (Pseudomonas syringae pv. syringae (strain B728a)).